Consider the following 145-residue polypeptide: MNKLSRQNKIKQIIRSKHIGTQEELKHQLELEKVFVTQATLSRDMRELGLFKSRDKEGYLYYEIPENGSTIFTPAALYYIKKVFRTDALLVFHTNLGEADVLANLIDSESHSEILGTVAGADTLLVICKNEEIASQLESDVLSNL.

The protein belongs to the ArgR family.

The protein localises to the cytoplasm. It participates in amino-acid biosynthesis; L-arginine biosynthesis [regulation]. Functionally, regulates arginine biosynthesis genes. The polypeptide is Arginine repressor (Streptococcus mutans serotype c (strain ATCC 700610 / UA159)).